A 414-amino-acid chain; its full sequence is Snake venom metalloproteinase (414 aa).

The first 20 residues, 1–20, serve as a signal peptide directing secretion; that stretch reads MIEVLLVTICLAVFPYQGSS. The propeptide occupies 21-190; sequence IILESGNVND…KASDLNFNSD (170 aa). Position 191 is a pyrrolidone carboxylic acid (glutamine 191). The region spanning 197-393 is the Peptidase M12B domain; sequence RYVELVIVAD…YKPQCILNKP (197 aa). Positions 200 and 284 each coordinate Ca(2+). 2 cysteine pairs are disulfide-bonded: cysteine 308-cysteine 388 and cysteine 348-cysteine 355. Histidine 333 provides a ligand contact to Zn(2+). Glutamate 334 is an active-site residue. Residues histidine 337 and histidine 343 each coordinate Zn(2+). Ca(2+) contacts are provided by cysteine 388 and asparagine 391. Positions 394–414 are excised as a propeptide; the sequence is LRIDPVSTPVSGNELLEAGEE.

The protein belongs to the venom metalloproteinase (M12B) family. P-I subfamily. As to quaternary structure, monomer. It depends on Zn(2+) as a cofactor. Expressed by the venom gland.

The protein resides in the secreted. Functionally, snake venom metalloproteinase that impairs hemostasis in the envenomed animal. In Crotalus molossus molossus (Northern black-tailed rattlesnake), this protein is Snake venom metalloproteinase.